The following is a 171-amino-acid chain: Putative F-box protein At1g32020 (171 aa).

The F-box domain maps to 3-49; sequence CDRISTLPDHLVAKIVSYLGIKDSIKTSVLSKRWEFVWLKVVGLDLK.

This is Putative F-box protein At1g32020 from Arabidopsis thaliana (Mouse-ear cress).